The following is a 193-amino-acid chain: Ancillary SecYEG translocon subunit (193 aa).

Residues 1–11 (MIKNSYINEKL) lie on the Cytoplasmic side of the membrane. The helical transmembrane segment at 12–34 (NFYQKSFLTCMLLIVIVIVYFFS) threads the bilayer. The Extracellular segment spans residues 35-193 (KNYLDKPKNS…IIQMKINNYN (159 aa)).

The protein belongs to the YfgM family. Interacts with the Sec translocon. Forms a complex with PpiD.

The protein resides in the cell membrane. In terms of biological role, may mediate protein transfer from the Sec translocon to the chaperone network via its extracellular C-terminal region. The sequence is that of Ancillary SecYEG translocon subunit from Buchnera aphidicola subsp. Baizongia pistaciae (strain Bp).